The primary structure comprises 228 residues: Lipoprotein-releasing system ATP-binding protein LolD (228 aa).

The 221-residue stretch at L7–L227 folds into the ABC transporter domain. Residue A43–S50 coordinates ATP.

It belongs to the ABC transporter superfamily. Lipoprotein translocase (TC 3.A.1.125) family. As to quaternary structure, the complex is composed of two ATP-binding proteins (LolD) and two transmembrane proteins (LolC and LolE).

Its subcellular location is the cell inner membrane. Functionally, part of the ABC transporter complex LolCDE involved in the translocation of mature outer membrane-directed lipoproteins, from the inner membrane to the periplasmic chaperone, LolA. Responsible for the formation of the LolA-lipoprotein complex in an ATP-dependent manner. The chain is Lipoprotein-releasing system ATP-binding protein LolD from Rhizobium meliloti (strain 1021) (Ensifer meliloti).